The chain runs to 426 residues: Histidine--tRNA ligase (426 aa).

The protein belongs to the class-II aminoacyl-tRNA synthetase family.

It localises to the cytoplasm. The enzyme catalyses tRNA(His) + L-histidine + ATP = L-histidyl-tRNA(His) + AMP + diphosphate + H(+). The sequence is that of Histidine--tRNA ligase from Saccharolobus islandicus (strain M.16.27) (Sulfolobus islandicus).